The primary structure comprises 287 residues: Protein REVEILLE 3 (287 aa).

One can recognise an HTH myb-type domain in the interval Thr-56–Gln-110. The segment at residues Trp-83 to Phe-106 is a DNA-binding region (H-T-H motif). Positions Lys-111–Ala-135 are disordered.

Its subcellular location is the nucleus. Probable transcription factor. The chain is Protein REVEILLE 3 (RVE3) from Arabidopsis thaliana (Mouse-ear cress).